We begin with the raw amino-acid sequence, 511 residues long: Aminotransferase FGSG_17085 (511 aa).

Residue 165–166 coordinates pyridoxal 5'-phosphate; sequence GA. Residue tyrosine 200 participates in substrate binding. A pyridoxal 5'-phosphate-binding site is contributed by aspartate 310. Lysine 339 is subject to N6-(pyridoxal phosphate)lysine. Residue glycine 371 participates in substrate binding. 372–373 lines the pyridoxal 5'-phosphate pocket; that stretch reads HT.

Belongs to the class-III pyridoxal-phosphate-dependent aminotransferase family. Requires pyridoxal 5'-phosphate as cofactor.

Its pathway is secondary metabolite biosynthesis. In terms of biological role, aminotransferase; part of the gene cluster that mediates the biosynthesis of the lipopeptide fusaristatin A. Fusaristatin A consists of a polyketide chain linked to three amino acid residues glutamine (Gln), dehydroalanine (dehydro-Ala), and beta-aminoisobutyric acid. The biosynthesis starts with formation of a linear polyketide chain by the highly reducing polyketide synthase PKS6. The gene cluster does not contain an acyl-CoA ligase or an acyl-transferase, and it is therefore predicted that the polyketide is transferred directly to the nonribosomal peptide synthetase NRPS7. Modules 1-3 from NRPS7 incorporate dehydro-Ala, Gln, and beta-aminoisobutyric acid in the compound, which is released by cyclization. The beta-aminoisobutyric acid units are most likely not freely available to the NRPS, but can be synthesized from thymine, which requires a dehydrogenase, a monooxygenase, and an aminotransferase. The fusaristatin A cluster contains a cytochrome P450 monooxygenase (FGSG_08207) and an aminotransferase (FGSG_17085), which theoretically can perform two of the enzymatic steps. The enzymes may however also be involved in biosynthesis of dehydroalanine or modification of the polyketide. The dehydro-Ala residue can be a result of cyclization, where serine is dehydrated. The last gene of the cluster encodes a protein with an A/B barrel domain found in variable enzymes, which hampers functional prediction. The protein is Aminotransferase FGSG_17085 of Gibberella zeae (strain ATCC MYA-4620 / CBS 123657 / FGSC 9075 / NRRL 31084 / PH-1) (Wheat head blight fungus).